Reading from the N-terminus, the 182-residue chain is ADP-ribosylation factor-like protein 3 (182 aa).

G2 carries N-myristoyl glycine lipidation. S5 carries the post-translational modification Phosphoserine. GTP is bound by residues 24-31, T48, 67-71, G70, 126-129, and 159-161; these read GLDNAGKT, DIGGQ, NKQD, and SAL. T31 and T48 together coordinate Mg(2+).

Belongs to the small GTPase superfamily. Arf family. As to quaternary structure, found in a complex with ARL3, RP2 and UNC119 (or UNC119B); RP2 induces hydrolysis of GTP ARL3 in the complex, leading to the release of UNC119 (or UNC119B). Interacts with RP2; interaction is direct and stimulated with the activated GTP-bound form of ARL3. Interacts with SYS1. The GTP-bound form interacts with ARL2BP and PDE6D. Microtubule-associated protein. May interact with GOLGA4. Interacts with GGA1; the interaction recruits PKD1:PKD2 complex to trans-Golgi network and is required for ciliary targeting of PKD1:PKD2 complex. Interacts with DNAAF9. As to expression, expressed in the retina. Strongly expressed in connecting cilium, the myoid region of the inner segments (IS) and in cone photoreceptors (at protein level).

The protein localises to the golgi apparatus membrane. The protein resides in the cytoplasm. Its subcellular location is the cytoskeleton. It is found in the spindle. It localises to the nucleus. The protein localises to the microtubule organizing center. The protein resides in the centrosome. Its subcellular location is the cell projection. It is found in the cilium. In terms of biological role, small GTP-binding protein which cycles between an inactive GDP-bound and an active GTP-bound form, and the rate of cycling is regulated by guanine nucleotide exchange factors (GEF) and GTPase-activating proteins (GAP). Required for normal cytokinesis and cilia signaling. Requires assistance from GTPase-activating proteins (GAPs) like RP2 and PDE6D, in order to cycle between inactive GDP-bound and active GTP-bound forms. Required for targeting proteins to the cilium, including myristoylated NPHP3 and prenylated INPP5E. Targets NPHP3 to the ciliary membrane by releasing myristoylated NPHP3 from UNC119B cargo adapter into the cilium. Required for PKD1:PKD2 complex targeting from the trans-Golgi network to the cilium. The sequence is that of ADP-ribosylation factor-like protein 3 (ARL3) from Homo sapiens (Human).